Consider the following 66-residue polypeptide: Large ribosomal subunit protein bL33c (66 aa).

This sequence belongs to the bacterial ribosomal protein bL33 family.

The protein resides in the plastid. Its subcellular location is the chloroplast. This chain is Large ribosomal subunit protein bL33c, found in Brachypodium distachyon (Purple false brome).